Reading from the N-terminus, the 146-residue chain is Cyanate hydratase (146 aa).

Residues Arg87, Glu90, and Ser113 contribute to the active site.

This sequence belongs to the cyanase family.

The catalysed reaction is cyanate + hydrogencarbonate + 3 H(+) = NH4(+) + 2 CO2. Its function is as follows. Catalyzes the reaction of cyanate with bicarbonate to produce ammonia and carbon dioxide. The polypeptide is Cyanate hydratase (Synechococcus elongatus (strain ATCC 33912 / PCC 7942 / FACHB-805) (Anacystis nidulans R2)).